Reading from the N-terminus, the 322-residue chain is Eukaryotic translation initiation factor 3 subunit I (322 aa).

WD repeat units follow at residues 4-43 (GHER…RLGT), 46-85 (GHQG…VIAS), 141-180 (MVES…KVVD), 184-223 (DHTA…CLKT), and 281-322 (GHFG…NIFE).

This sequence belongs to the eIF-3 subunit I family. As to quaternary structure, component of the eukaryotic translation initiation factor 3 (eIF-3) complex. The eIF-3 complex interacts with pix.

It localises to the cytoplasm. In terms of biological role, component of the eukaryotic translation initiation factor 3 (eIF-3) complex, which is involved in protein synthesis of a specialized repertoire of mRNAs and, together with other initiation factors, stimulates binding of mRNA and methionyl-tRNAi to the 40S ribosome. The eIF-3 complex specifically targets and initiates translation of a subset of mRNAs involved in cell proliferation. The polypeptide is Eukaryotic translation initiation factor 3 subunit I (Drosophila mojavensis (Fruit fly)).